Here is a 257-residue protein sequence, read N- to C-terminus: Ditrans,polycis-undecaprenyl-diphosphate synthase ((2E,6E)-farnesyl-diphosphate specific) (257 aa).

Aspartate 24 is a catalytic residue. Residue aspartate 24 coordinates Mg(2+). Residues 25 to 28 (GNGR), tryptophan 29, arginine 37, histidine 41, and 69 to 71 (SSE) contribute to the substrate site. Asparagine 72 functions as the Proton acceptor in the catalytic mechanism. Substrate contacts are provided by residues tryptophan 73, arginine 75, arginine 192, and 198 to 200 (RIS). Glutamate 211 is a Mg(2+) binding site.

Belongs to the UPP synthase family. Homodimer. Mg(2+) serves as cofactor.

The enzyme catalyses 8 isopentenyl diphosphate + (2E,6E)-farnesyl diphosphate = di-trans,octa-cis-undecaprenyl diphosphate + 8 diphosphate. Its function is as follows. Catalyzes the sequential condensation of isopentenyl diphosphate (IPP) with (2E,6E)-farnesyl diphosphate (E,E-FPP) to yield (2Z,6Z,10Z,14Z,18Z,22Z,26Z,30Z,34E,38E)-undecaprenyl diphosphate (di-trans,octa-cis-UPP). UPP is the precursor of glycosyl carrier lipid in the biosynthesis of bacterial cell wall polysaccharide components such as peptidoglycan and lipopolysaccharide. The polypeptide is Ditrans,polycis-undecaprenyl-diphosphate synthase ((2E,6E)-farnesyl-diphosphate specific) (Aliivibrio fischeri (strain ATCC 700601 / ES114) (Vibrio fischeri)).